Consider the following 492-residue polypeptide: Glutamyl-tRNA(Gln) amidotransferase subunit A, mitochondrial (492 aa).

Residues Lys78 and Ser159 each act as charge relay system in the active site. The active-site Acyl-ester intermediate is the Ser183.

Belongs to the amidase family. GatA subfamily. As to quaternary structure, subunit of the heterotrimeric GatCAB amidotransferase (AdT) complex, composed of A, B and C subunits.

The protein localises to the mitochondrion. The catalysed reaction is L-glutamyl-tRNA(Gln) + L-glutamine + ATP + H2O = L-glutaminyl-tRNA(Gln) + L-glutamate + ADP + phosphate + H(+). Its function is as follows. Allows the formation of correctly charged Gln-tRNA(Gln) through the transamidation of misacylated Glu-tRNA(Gln) in the mitochondria. The reaction takes place in the presence of glutamine and ATP through an activated gamma-phospho-Glu-tRNA(Gln). This chain is Glutamyl-tRNA(Gln) amidotransferase subunit A, mitochondrial, found in Anopheles gambiae (African malaria mosquito).